A 493-amino-acid chain; its full sequence is Ketol-acid reductoisomerase (NADP(+)) (493 aa).

Residues 17–208 (LGKCRFMKRE…GGDRAGVLES (192 aa)) enclose the KARI N-terminal Rossmann domain. NADP(+) contacts are provided by residues 45 to 48 (CGAQ), Arg-68, Arg-76, Ser-78, and 108 to 110 (DKQ). His-132 is an active-site residue. Gly-158 is an NADP(+) binding site. KARI C-terminal knotted domains follow at residues 209 to 353 (SFIA…SEQE) and 354 to 486 (YYDK…MTDM). Mg(2+) is bound by residues Asp-217, Glu-221, Glu-389, and Glu-393. Ser-414 is a substrate binding site.

Belongs to the ketol-acid reductoisomerase family. Mg(2+) is required as a cofactor.

It carries out the reaction (2R)-2,3-dihydroxy-3-methylbutanoate + NADP(+) = (2S)-2-acetolactate + NADPH + H(+). The enzyme catalyses (2R,3R)-2,3-dihydroxy-3-methylpentanoate + NADP(+) = (S)-2-ethyl-2-hydroxy-3-oxobutanoate + NADPH + H(+). Its pathway is amino-acid biosynthesis; L-isoleucine biosynthesis; L-isoleucine from 2-oxobutanoate: step 2/4. It participates in amino-acid biosynthesis; L-valine biosynthesis; L-valine from pyruvate: step 2/4. In terms of biological role, involved in the biosynthesis of branched-chain amino acids (BCAA). Catalyzes an alkyl-migration followed by a ketol-acid reduction of (S)-2-acetolactate (S2AL) to yield (R)-2,3-dihydroxy-isovalerate. In the isomerase reaction, S2AL is rearranged via a Mg-dependent methyl migration to produce 3-hydroxy-3-methyl-2-ketobutyrate (HMKB). In the reductase reaction, this 2-ketoacid undergoes a metal-dependent reduction by NADPH to yield (R)-2,3-dihydroxy-isovalerate. The polypeptide is Ketol-acid reductoisomerase (NADP(+)) (Colwellia psychrerythraea (strain 34H / ATCC BAA-681) (Vibrio psychroerythus)).